The following is a 640-amino-acid chain: METPATEKPAGEKSGTEKIGVKRLGALSLAAIGVVYGDIGTSPLYTLKECFDPDHGIPSSPENVIGIASLVFWAIILVVTIKYVLFVMRADNRGEGGILALLALAIRATGGDRGLVGPLVGLGLFGAALFIGDGMITPAISVLSAIEGLEVGTPFFAPYVVPLTLIVLVALFTIQSHGTELVGRLFGPVMVVWFLTIAALGLTEVVGHPHILMAVNPAYGLTFLFTHGWIAFVVMGSVVLAVTGGEALYADMGHFGKLPIQMAWFALVLPALTLNYFGQAALILDNPEAARNPFYMLVPGWGLYPMVILATLATVIASQAVISGVFSLSRQAVQLGYSPRLDIRHTSDEEEGQIYIPRANWGLLLGIVALVVGFKSSSNLAAAYGIAVTGTMAATTILALVVAHRSWNWPLWLCLGLGAVFLAVDLGFLGANLLKVTQGGWFPLAVGLGMLLLMATWRKGRDILSRRLADGALPLDMFMQQQKDSTSILRVRGTAVFMTGGTDTVPIALLHNLKHNKVLHQRVVFLTVITEDIPRVSARDRVVVEGLAEGFYRITVRYGFFQEPDIPKVLRLCKAFGLEFEMMDTSFFLGRETLVPSTHPEMPEWRERLFVIMSRNAVSATDFFRIPAGRVVELGIQVQL.

A run of 12 helical transmembrane segments spans residues 24 to 44, 67 to 87, 116 to 136, 154 to 174, 186 to 206, 222 to 242, 264 to 284, 296 to 316, 354 to 374, 382 to 402, 411 to 431, and 436 to 456; these read LGAL…TSPL, IASL…VLFV, VGPL…DGMI, PFFA…LFTI, FGPV…TEVV, TFLF…VLAV, WFAL…ALIL, MLVP…ATVI, IYIP…VVGF, AAYG…ALVV, LWLC…FLGA, and VTQG…LMAT.

The protein belongs to the HAK/KUP transporter (TC 2.A.72) family.

Its subcellular location is the cell inner membrane. The enzyme catalyses K(+)(in) + H(+)(in) = K(+)(out) + H(+)(out). Transport of potassium into the cell. Likely operates as a K(+):H(+) symporter. This Paramagnetospirillum magneticum (strain ATCC 700264 / AMB-1) (Magnetospirillum magneticum) protein is Probable potassium transport system protein Kup 1.